The primary structure comprises 342 residues: MMYNLLRPLLFLLDPETAHTVTLDTLNLLKRTGLLPDRTIDCTPVRVMELDFPNPVGLAAGLDKNGTCISALASLGFGFIEVGTITPRPQVGNPRPRLFRIPQAEAIINRMGFNNVGVDKLIENVQQSGYRGILGINIGKNADTPLQNAIDDYLICLRKVYLHASYVTVNISSPNTQQLRQLQNETELEHLLGALKAEQTRLSDLHGRYTPLAIKIAPDLESEQITVIASLLMKHRMDAVIATNTTTAREGVEHLPRGNEKGGLSGAPLTERSTTVIRQLANHLQHAIPIIGAGGIMSARDAQLKIEAGASLVQIYSGLIYRGPDLVTKTVSLLCSRTTHAG.

Residues 60-64 (AGLDK) and threonine 84 each bind FMN. Residue lysine 64 participates in substrate binding. A substrate-binding site is contributed by 109-113 (NRMGF). FMN contacts are provided by asparagine 137 and asparagine 170. Asparagine 170 is a binding site for substrate. The active-site Nucleophile is the serine 173. Position 175 (asparagine 175) interacts with substrate. Lysine 215 and threonine 243 together coordinate FMN. 244–245 (NT) serves as a coordination point for substrate. Residues glycine 266, glycine 295, and 316–317 (YS) contribute to the FMN site.

The protein belongs to the dihydroorotate dehydrogenase family. Type 2 subfamily. In terms of assembly, monomer. The cofactor is FMN.

It localises to the cell membrane. The catalysed reaction is (S)-dihydroorotate + a quinone = orotate + a quinol. The protein operates within pyrimidine metabolism; UMP biosynthesis via de novo pathway; orotate from (S)-dihydroorotate (quinone route): step 1/1. Its function is as follows. Catalyzes the conversion of dihydroorotate to orotate with quinone as electron acceptor. The polypeptide is Dihydroorotate dehydrogenase (quinone) (Nitrosomonas europaea (strain ATCC 19718 / CIP 103999 / KCTC 2705 / NBRC 14298)).